Reading from the N-terminus, the 746-residue chain is Ring assembly protein 3 (746 aa).

The protein localises to the cytoplasm. Its function is as follows. Essential for actinomyosin ring assembly during cytokinesis. Has a role, in conjunction with F-actin, in assembling myosin II-containing proteins, such as myo2, at the division site. In Schizosaccharomyces pombe (strain 972 / ATCC 24843) (Fission yeast), this protein is Ring assembly protein 3 (rng3).